Here is a 139-residue protein sequence, read N- to C-terminus: Endoribonuclease YbeY (139 aa).

The Zn(2+) site is built by His-110, His-114, and His-120.

This sequence belongs to the endoribonuclease YbeY family. Zn(2+) serves as cofactor.

It is found in the cytoplasm. Functionally, single strand-specific metallo-endoribonuclease involved in late-stage 70S ribosome quality control and in maturation of the 3' terminus of the 16S rRNA. In Thermus thermophilus (strain ATCC BAA-163 / DSM 7039 / HB27), this protein is Endoribonuclease YbeY.